A 148-amino-acid chain; its full sequence is Lysozyme-like protein 1 (148 aa).

An N-terminal signal peptide occupies residues 1 to 19 (MKSVGVFALIISFSIVAES). In terms of domain architecture, C-type lysozyme spans 20–148 (KIYTRCKLAK…SEWKRGCEVS (129 aa)). Disulfide bonds link C25–C145, C49–C133, C83–C98, and C94–C112. The active site involves E54. N58 carries N-linked (GlcNAc...) asparagine glycosylation. Residue D71 is part of the active site.

The protein belongs to the glycosyl hydrolase 22 family. Monomer.

The protein resides in the secreted. It catalyses the reaction Hydrolysis of (1-&gt;4)-beta-linkages between N-acetylmuramic acid and N-acetyl-D-glucosamine residues in a peptidoglycan and between N-acetyl-D-glucosamine residues in chitodextrins.. This Mus musculus (Mouse) protein is Lysozyme-like protein 1 (Lyzl1).